The following is a 176-amino-acid chain: MKLNDLRDNEGARKGRIRVGRGIGSGKGKTGGRGQKGQKSRSGVAIKGFEGGQMPLHMRLPKRGFNNPFGKDFAEVNIGMVQKFIDAKKLDGKKDITEEALREAGLVRGGKDGVRLLGKGELKAKVKFIVAGASKGAVEAVEKAGGSVEVIPAAQPEHEKKAARSEANKKAKAKAE.

Residues 1–13 show a composition bias toward basic and acidic residues; that stretch reads MKLNDLRDNEGAR. Disordered regions lie at residues 1–48 and 151–176; these read MKLN…AIKG and IPAA…AKAE. Positions 21-35 are enriched in gly residues; that stretch reads RGIGSGKGKTGGRGQ. Residues 156–176 are compositionally biased toward basic and acidic residues; the sequence is PEHEKKAARSEANKKAKAKAE.

The protein belongs to the universal ribosomal protein uL15 family. Part of the 50S ribosomal subunit.

Binds to the 23S rRNA. This is Large ribosomal subunit protein uL15 from Erythrobacter litoralis (strain HTCC2594).